Here is a 446-residue protein sequence, read N- to C-terminus: Phosphoglucosamine mutase (446 aa).

Ser-100 serves as the catalytic Phosphoserine intermediate. Mg(2+) is bound by residues Ser-100, Asp-241, Asp-243, and Asp-245. Ser-100 carries the phosphoserine modification.

This sequence belongs to the phosphohexose mutase family. The cofactor is Mg(2+). Post-translationally, activated by phosphorylation.

The catalysed reaction is alpha-D-glucosamine 1-phosphate = D-glucosamine 6-phosphate. Its function is as follows. Catalyzes the conversion of glucosamine-6-phosphate to glucosamine-1-phosphate. The polypeptide is Phosphoglucosamine mutase (Methylobacterium nodulans (strain LMG 21967 / CNCM I-2342 / ORS 2060)).